Reading from the N-terminus, the 404-residue chain is Diaminopropionate ammonia-lyase (404 aa).

Lys78 is modified (N6-(pyridoxal phosphate)lysine).

The protein belongs to the diaminopropionate ammonia-lyase family. Homodimer. Pyridoxal 5'-phosphate serves as cofactor.

It carries out the reaction (S)-2,3-diaminopropanoate + H2O + H(+) = pyruvate + 2 NH4(+). It catalyses the reaction (R)-2,3-diaminopropanoate + H2O + H(+) = pyruvate + 2 NH4(+). Competitively inhibited by L- and D-alanine. Its function is as follows. Catalyzes the alpha,beta-elimination reaction of both L- and D-alpha,beta-diaminopropionate (DAP) to form pyruvate and ammonia. In vitro L- and D-isomers of serine are also degraded, though slowly; it is the only serine dehydratase which can eliminate an amino group at the beta-carbon position. In vivo L-, D- and a mixure of DL-DAP allow growth. DL-DAP is toxic in the absence of this enzyme, it may inhibit enzymes involved in the synthesis of pyruvate and aspartate, as well as amino acids derived from them. In Salmonella typhimurium (strain LT2 / SGSC1412 / ATCC 700720), this protein is Diaminopropionate ammonia-lyase (dpaL).